We begin with the raw amino-acid sequence, 638 residues long: DNA gyrase subunit B (638 aa).

One can recognise a Toprim domain in the interval 431 to 545; that stretch reads RELFIVEGNS…YGFVYIAQPP (115 aa). The Mg(2+) site is built by Glu437, Asp510, and Asp512.

Belongs to the type II topoisomerase GyrB family. In terms of assembly, heterotetramer, composed of two GyrA and two GyrB chains. In the heterotetramer, GyrA contains the active site tyrosine that forms a transient covalent intermediate with DNA, while GyrB binds cofactors and catalyzes ATP hydrolysis. Requires Mg(2+) as cofactor. Mn(2+) is required as a cofactor. The cofactor is Ca(2+).

It is found in the cytoplasm. The enzyme catalyses ATP-dependent breakage, passage and rejoining of double-stranded DNA.. A type II topoisomerase that negatively supercoils closed circular double-stranded (ds) DNA in an ATP-dependent manner to modulate DNA topology and maintain chromosomes in an underwound state. Negative supercoiling favors strand separation, and DNA replication, transcription, recombination and repair, all of which involve strand separation. Also able to catalyze the interconversion of other topological isomers of dsDNA rings, including catenanes and knotted rings. Type II topoisomerases break and join 2 DNA strands simultaneously in an ATP-dependent manner. This is DNA gyrase subunit B from Metamycoplasma arthritidis (Mycoplasma arthritidis).